The primary structure comprises 92 residues: Small ribosomal subunit protein uS19c (92 aa).

Belongs to the universal ribosomal protein uS19 family.

The protein resides in the plastid. Its subcellular location is the chloroplast. Its function is as follows. Protein S19 forms a complex with S13 that binds strongly to the 16S ribosomal RNA. This Fagopyrum esculentum subsp. ancestrale (Wild buckwheat) protein is Small ribosomal subunit protein uS19c.